The chain runs to 838 residues: Protein kintoun (838 aa).

5 disordered regions span residues 106–125 (RPKN…LNWS), 212–238 (NPTA…GKPE), 370–411 (LRHF…TSSP), 557–696 (NAPL…DSCS), and 776–838 (QQRR…EMDD). Residues 114 to 125 (DPSSGSRGLNWS) show a composition bias toward polar residues. Residues 370–380 (LRHFSREDSGV) show a composition bias toward basic and acidic residues. Phosphoserine is present on S378. Positions 389 to 398 (PVEEDPDGEL) are enriched in acidic residues. Positions 557–572 (NAPLDVEFERNQEGHA) are enriched in basic and acidic residues. Residues 583–592 (EEEEEEEDKE) are compositionally biased toward acidic residues. A compositionally biased stretch (low complexity) spans 601 to 611 (DQQQQQQVQNK). Composition is skewed to basic residues over residues 612-623 (KSGKKQRKRNKK) and 673-683 (RSHRGILKRFS). A Phosphoserine modification is found at S781. A compositionally biased stretch (basic and acidic residues) spans 789 to 802 (EETRGSALKQKENP).

Belongs to the PIH1 family. Kintoun subfamily. In terms of assembly, interacts with Pp1alpha-96A, Pp1-87B, Pp1-13C and flw.

It localises to the cytoplasm. Its function is as follows. Required for cytoplasmic pre-assembly of axonemal dyneins, thereby playing a central role in motility in cilia and flagella. Involved in pre-assembly of dynein arm complexes in the cytoplasm before intraflagellar transport loads them for the ciliary compartment. This Drosophila sechellia (Fruit fly) protein is Protein kintoun.